The following is a 220-amino-acid chain: Uracil-DNA glycosylase (220 aa).

Aspartate 61 acts as the Proton acceptor in catalysis.

This sequence belongs to the uracil-DNA glycosylase (UDG) superfamily. UNG family.

The protein resides in the cytoplasm. The catalysed reaction is Hydrolyzes single-stranded DNA or mismatched double-stranded DNA and polynucleotides, releasing free uracil.. Functionally, excises uracil residues from the DNA which can arise as a result of misincorporation of dUMP residues by DNA polymerase or due to deamination of cytosine. The protein is Uracil-DNA glycosylase of Pseudoalteromonas translucida (strain TAC 125).